A 257-amino-acid chain; its full sequence is uncharacterized protein (257 aa).

The chain crosses the membrane as a helical span at residues 7-27 (IGILEIVVILSILITSVSLAY).

The protein resides in the membrane. This is an uncharacterized protein from Methanocaldococcus jannaschii (strain ATCC 43067 / DSM 2661 / JAL-1 / JCM 10045 / NBRC 100440) (Methanococcus jannaschii).